The following is a 587-amino-acid chain: Folylpolyglutamate synthase, mitochondrial (587 aa).

The N-terminal 42 residues, 1 to 42 (MSRARSHLRAALFLAAASARGITTQVAARRGLSAWPVPQEPS), are a transit peptide targeting the mitochondrion. M43 carries the post-translational modification N-acetylmethionine. 106 to 109 (GKGS) is a binding site for ATP. Positions 130, 200, and 228 each coordinate Mg(2+). Residues R363 and D377 each coordinate ATP. S539 is subject to Phosphoserine.

The protein belongs to the folylpolyglutamate synthase family. In terms of assembly, monomer. It depends on K(+) as a cofactor. NH4(+) is required as a cofactor.

It is found in the mitochondrion inner membrane. The protein localises to the mitochondrion matrix. Its subcellular location is the cytoplasm. The catalysed reaction is (6S)-5,6,7,8-tetrahydrofolyl-(gamma-L-Glu)(n) + L-glutamate + ATP = (6S)-5,6,7,8-tetrahydrofolyl-(gamma-L-Glu)(n+1) + ADP + phosphate + H(+). It participates in cofactor biosynthesis; tetrahydrofolylpolyglutamate biosynthesis. Its activity is regulated as follows. Activated by 10 mM sodium bicarbonate. Functionally, catalyzes conversion of folates to polyglutamate derivatives allowing concentration of folate compounds in the cell and the intracellular retention of these cofactors, which are important substrates for most of the folate-dependent enzymes that are involved in one-carbon transfer reactions involved in purine, pyrimidine and amino acid synthesis. Unsubstituted reduced folates are the preferred substrates. Metabolizes methotrexate (MTX) to polyglutamates. This is Folylpolyglutamate synthase, mitochondrial (FPGS) from Homo sapiens (Human).